The primary structure comprises 314 residues: ATP synthase gamma chain (314 aa).

It belongs to the ATPase gamma chain family. As to quaternary structure, F-type ATPases have 2 components, CF(1) - the catalytic core - and CF(0) - the membrane proton channel. CF(1) has five subunits: alpha(3), beta(3), gamma(1), delta(1), epsilon(1). CF(0) has three main subunits: a, b and c.

Its subcellular location is the cellular thylakoid membrane. Functionally, produces ATP from ADP in the presence of a proton gradient across the membrane. The gamma chain is believed to be important in regulating ATPase activity and the flow of protons through the CF(0) complex. This chain is ATP synthase gamma chain, found in Synechocystis sp. (strain ATCC 27184 / PCC 6803 / Kazusa).